A 178-amino-acid polypeptide reads, in one-letter code: ATP synthase subunit delta (178 aa).

This sequence belongs to the ATPase delta chain family. In terms of assembly, F-type ATPases have 2 components, F(1) - the catalytic core - and F(0) - the membrane proton channel. F(1) has five subunits: alpha(3), beta(3), gamma(1), delta(1), epsilon(1). F(0) has three main subunits: a(1), b(2) and c(10-14). The alpha and beta chains form an alternating ring which encloses part of the gamma chain. F(1) is attached to F(0) by a central stalk formed by the gamma and epsilon chains, while a peripheral stalk is formed by the delta and b chains.

It localises to the cell inner membrane. Its function is as follows. F(1)F(0) ATP synthase produces ATP from ADP in the presence of a proton or sodium gradient. F-type ATPases consist of two structural domains, F(1) containing the extramembraneous catalytic core and F(0) containing the membrane proton channel, linked together by a central stalk and a peripheral stalk. During catalysis, ATP synthesis in the catalytic domain of F(1) is coupled via a rotary mechanism of the central stalk subunits to proton translocation. This protein is part of the stalk that links CF(0) to CF(1). It either transmits conformational changes from CF(0) to CF(1) or is implicated in proton conduction. In Alcanivorax borkumensis (strain ATCC 700651 / DSM 11573 / NCIMB 13689 / SK2), this protein is ATP synthase subunit delta.